The primary structure comprises 248 residues: Type II methyltransferase M.AquIA (248 aa).

The 246-residue stretch at 3–248 folds into the SAM-dependent MTase C5-type domain; the sequence is KKLISLFSGA…IKDRIKNHGY (246 aa). The active site involves Cys82.

This sequence belongs to the class I-like SAM-binding methyltransferase superfamily. C5-methyltransferase family. Heterodimer of an alpha and a beta subunit.

The catalysed reaction is a 2'-deoxycytidine in DNA + S-adenosyl-L-methionine = a 5-methyl-2'-deoxycytidine in DNA + S-adenosyl-L-homocysteine + H(+). Functionally, a methylase, recognizes the double-stranded sequence 5'-CYCGRG-3', methylates C-1 on both strands, and protects the DNA from cleavage by the AquI endonuclease. In Picosynechococcus sp. (strain ATCC 27264 / PCC 7002 / PR-6) (Agmenellum quadruplicatum), this protein is Type II methyltransferase M.AquIA (aquIMA).